A 300-amino-acid polypeptide reads, in one-letter code: Tyrosine recombinase XerC (300 aa).

The 87-residue stretch at 2–88 (TQEGKLEQQF…SLRSFYTFLL (87 aa)) folds into the Core-binding (CB) domain. One can recognise a Tyr recombinase domain in the interval 109 to 294 (RLPKFFYSEE…TKEHLKSTYM (186 aa)). Catalysis depends on residues Arg150, Lys174, His246, Arg249, and His272. Tyr281 functions as the O-(3'-phospho-DNA)-tyrosine intermediate in the catalytic mechanism.

Belongs to the 'phage' integrase family. XerC subfamily. In terms of assembly, forms a cyclic heterotetrameric complex composed of two molecules of XerC and two molecules of XerD.

It is found in the cytoplasm. Site-specific tyrosine recombinase, which acts by catalyzing the cutting and rejoining of the recombining DNA molecules. The XerC-XerD complex is essential to convert dimers of the bacterial chromosome into monomers to permit their segregation at cell division. It also contributes to the segregational stability of plasmids. The chain is Tyrosine recombinase XerC from Listeria monocytogenes serotype 4a (strain HCC23).